Consider the following 414-residue polypeptide: Esterase FrsA (414 aa).

It belongs to the FrsA family.

The enzyme catalyses a carboxylic ester + H2O = an alcohol + a carboxylate + H(+). In terms of biological role, catalyzes the hydrolysis of esters. This is Esterase FrsA from Escherichia coli (strain K12 / DH10B).